A 363-amino-acid polypeptide reads, in one-letter code: MNNHIDIFNIPISKINLLDLNRQNLKYFLISLGAKNFCTEQVMSWIYNYYCDDFNKMLNISIKTRKKLYEKSYIFASEFIEEKISYDGTIKWITDINNQKIETVYMPEKKRSTLCVSSQIGCSLKCHFCATGQEGFQRNLKVSEIIAQIWQANKRLKEKNIKKNITNIVFMGMGEPLLNLKNVVSALTIILDEYGFGLSKRRVTLSTSGIVPALDKLRNMIDVSLAISLHAPNDFIRNIIMPINRKYNISSVLSSALKYFKYSNANRGGITIEYVMLDRINDSNENARQLSVLLSKIPSKINLIPWNSFSGPSFLCSNTDRINMFANILRKKGFTTTIRKNRGEDINAACGQLTGIITNYFKK.

Catalysis depends on E102, which acts as the Proton acceptor. Residues 108–344 enclose the Radical SAM core domain; sequence EKKRSTLCVS…TTTIRKNRGE (237 aa). C115 and C350 are joined by a disulfide. [4Fe-4S] cluster contacts are provided by C122, C126, and C129. Residues 174–175, S206, 228–230, and N307 contribute to the S-adenosyl-L-methionine site; these read GE and SLH. Catalysis depends on C350, which acts as the S-methylcysteine intermediate.

It belongs to the radical SAM superfamily. RlmN family. The cofactor is [4Fe-4S] cluster.

The protein localises to the cytoplasm. The enzyme catalyses adenosine(2503) in 23S rRNA + 2 reduced [2Fe-2S]-[ferredoxin] + 2 S-adenosyl-L-methionine = 2-methyladenosine(2503) in 23S rRNA + 5'-deoxyadenosine + L-methionine + 2 oxidized [2Fe-2S]-[ferredoxin] + S-adenosyl-L-homocysteine. It catalyses the reaction adenosine(37) in tRNA + 2 reduced [2Fe-2S]-[ferredoxin] + 2 S-adenosyl-L-methionine = 2-methyladenosine(37) in tRNA + 5'-deoxyadenosine + L-methionine + 2 oxidized [2Fe-2S]-[ferredoxin] + S-adenosyl-L-homocysteine. Functionally, specifically methylates position 2 of adenine 2503 in 23S rRNA and position 2 of adenine 37 in tRNAs. m2A2503 modification seems to play a crucial role in the proofreading step occurring at the peptidyl transferase center and thus would serve to optimize ribosomal fidelity. The sequence is that of Dual-specificity RNA methyltransferase RlmN from Buchnera aphidicola subsp. Acyrthosiphon pisum (strain APS) (Acyrthosiphon pisum symbiotic bacterium).